Consider the following 493-residue polypeptide: Glutamyl-tRNA(Gln) amidotransferase subunit A (493 aa).

Residues Lys-78 and Ser-158 each act as charge relay system in the active site. Ser-182 (acyl-ester intermediate) is an active-site residue.

This sequence belongs to the amidase family. GatA subfamily. As to quaternary structure, heterotrimer of A, B and C subunits.

It catalyses the reaction L-glutamyl-tRNA(Gln) + L-glutamine + ATP + H2O = L-glutaminyl-tRNA(Gln) + L-glutamate + ADP + phosphate + H(+). Its function is as follows. Allows the formation of correctly charged Gln-tRNA(Gln) through the transamidation of misacylated Glu-tRNA(Gln) in organisms which lack glutaminyl-tRNA synthetase. The reaction takes place in the presence of glutamine and ATP through an activated gamma-phospho-Glu-tRNA(Gln). The sequence is that of Glutamyl-tRNA(Gln) amidotransferase subunit A from Beijerinckia indica subsp. indica (strain ATCC 9039 / DSM 1715 / NCIMB 8712).